The chain runs to 247 residues: MVDREQLVQKARLAEQAERYDDMAAAMKSVTELNEALSNEERNLLSVAYKNVVGARRSSWRVISSIEQKTSADGNEKKIEMVRAYREKIEKELETVCQDVLNLLDNFLIKNCGETQHESKVFYLKMKGDYYRYLAEVATGEKRAAVVESSEKSYSEAHEISKEHMQPTHPIRLGLALNYSVFYYEIQNAPEQACHLAKTAFDDAIAELDTLNEDSYKDSTLIMQLLRDNLTLWTSDQQDDEGGEGNN.

The protein belongs to the 14-3-3 family. Homodimer, and heterodimer with other family members.

The protein resides in the cytoplasm. Its function is as follows. Adapter protein implicated in the regulation of a large spectrum of both general and specialized signaling pathways. Binds to a large number of partners, usually by recognition of a phosphoserine or phosphothreonine motif. Binding generally results in the modulation of the activity of the binding partner. The sequence is that of 14-3-3 protein gamma-1 (ywhag1) from Danio rerio (Zebrafish).